The chain runs to 237 residues: Phosphoribosylaminoimidazole-succinocarboxamide synthase (237 aa).

The protein belongs to the SAICAR synthetase family.

It catalyses the reaction 5-amino-1-(5-phospho-D-ribosyl)imidazole-4-carboxylate + L-aspartate + ATP = (2S)-2-[5-amino-1-(5-phospho-beta-D-ribosyl)imidazole-4-carboxamido]succinate + ADP + phosphate + 2 H(+). It functions in the pathway purine metabolism; IMP biosynthesis via de novo pathway; 5-amino-1-(5-phospho-D-ribosyl)imidazole-4-carboxamide from 5-amino-1-(5-phospho-D-ribosyl)imidazole-4-carboxylate: step 1/2. The protein is Phosphoribosylaminoimidazole-succinocarboxamide synthase of Escherichia coli O127:H6 (strain E2348/69 / EPEC).